A 359-amino-acid polypeptide reads, in one-letter code: 3-dehydroquinate synthase (359 aa).

Residues Asp-72 to Lys-77, Gly-106 to Asp-110, Thr-130 to Thr-131, Lys-143, and Lys-152 contribute to the NAD(+) site. Zn(2+) is bound by residues Glu-185, His-248, and His-265.

This sequence belongs to the sugar phosphate cyclases superfamily. Dehydroquinate synthase family. The cofactor is Co(2+). Requires Zn(2+) as cofactor. NAD(+) is required as a cofactor.

The protein localises to the cytoplasm. It carries out the reaction 7-phospho-2-dehydro-3-deoxy-D-arabino-heptonate = 3-dehydroquinate + phosphate. The protein operates within metabolic intermediate biosynthesis; chorismate biosynthesis; chorismate from D-erythrose 4-phosphate and phosphoenolpyruvate: step 2/7. Catalyzes the conversion of 3-deoxy-D-arabino-heptulosonate 7-phosphate (DAHP) to dehydroquinate (DHQ). The chain is 3-dehydroquinate synthase from Thermodesulfovibrio yellowstonii (strain ATCC 51303 / DSM 11347 / YP87).